Reading from the N-terminus, the 179-residue chain is MARLKELYTKELAPKLKEELGLANVMEVPRITKITINMGVGEAVGDKKVLENAVNDLVKIAGQKVVVTKSRKSIAGFKIRDGWPIGCKVTLRKDRMYEFLDRLIAVAIPRIRDFRGISPKQFDGRGNFSMGVTEQIIFPEIDYDKVDRLRGLDICITTTARTDEEGRALLKAFNFPFKG.

Belongs to the universal ribosomal protein uL5 family. In terms of assembly, part of the 50S ribosomal subunit; part of the 5S rRNA/L5/L18/L25 subcomplex. Contacts the 5S rRNA and the P site tRNA. Forms a bridge to the 30S subunit in the 70S ribosome.

Functionally, this is one of the proteins that bind and probably mediate the attachment of the 5S RNA into the large ribosomal subunit, where it forms part of the central protuberance. In the 70S ribosome it contacts protein S13 of the 30S subunit (bridge B1b), connecting the 2 subunits; this bridge is implicated in subunit movement. Contacts the P site tRNA; the 5S rRNA and some of its associated proteins might help stabilize positioning of ribosome-bound tRNAs. The protein is Large ribosomal subunit protein uL5 of Cellvibrio japonicus (strain Ueda107) (Pseudomonas fluorescens subsp. cellulosa).